The primary structure comprises 145 residues: Cuticle protein 65 (145 aa).

7 consecutive repeat copies span residues 27-30 (AAPA), 33-37 (AAPAV), 39-42 (AAPA), 86-89 (AAPV), 92-95 (AAPA), 98-101 (AAPA), and 123-126 (AAPA).

Component of the cuticle of migratory locust which contains more than 100 different structural proteins. The sequence is that of Cuticle protein 65 from Locusta migratoria (Migratory locust).